A 253-amino-acid chain; its full sequence is Serine/threonine-protein phosphatase 3 (253 aa).

Requires Mn(2+) as cofactor. Post-translationally, phosphorylated by YegI.

It catalyses the reaction O-phospho-L-seryl-[protein] + H2O = L-seryl-[protein] + phosphate. It carries out the reaction O-phospho-L-threonyl-[protein] + H2O = L-threonyl-[protein] + phosphate. Its activity is regulated as follows. Activity dramatically decreases in the presence of the general protein phosphatase inhibitor sodium phosphate. Slightly inhibited by sodium fluoride. Activity decreases in the presence of the metal chelator EDTA. In terms of biological role, PP2C-like phosphatase that can dephosphorylate YegI. In vitro, can hydrolyze p-nitrophenyl phosphate (pNPP) to p-nitrophenol. In Escherichia coli (strain K12), this protein is Serine/threonine-protein phosphatase 3.